Consider the following 398-residue polypeptide: Phosphoglycerate kinase (398 aa).

Residues 21 to 23, Arg36, 59 to 62, Arg119, and Arg157 each bind substrate; these read DFN and HLGR. ATP contacts are provided by residues Lys208, Gly296, Glu327, and 354 to 357; that span reads GGDS.

Belongs to the phosphoglycerate kinase family. As to quaternary structure, monomer.

It localises to the cytoplasm. The enzyme catalyses (2R)-3-phosphoglycerate + ATP = (2R)-3-phospho-glyceroyl phosphate + ADP. The protein operates within carbohydrate degradation; glycolysis; pyruvate from D-glyceraldehyde 3-phosphate: step 2/5. This chain is Phosphoglycerate kinase, found in Streptococcus sanguinis (strain SK36).